The chain runs to 130 residues: Sec-independent protein translocase protein TatB (130 aa).

The chain crosses the membrane as a helical span at residues 1–21 (MFDIGFTELTLIFIIGLVVLG). Composition is skewed to basic and acidic residues over residues 57–67 (QDMQERMEKQM) and 111–130 (PSDKDSADKNNHDQDSRRHD). The tract at residues 57–130 (QDMQERMEKQ…NHDQDSRRHD (74 aa)) is disordered.

This sequence belongs to the TatB family. In terms of assembly, the Tat system comprises two distinct complexes: a TatABC complex, containing multiple copies of TatA, TatB and TatC subunits, and a separate TatA complex, containing only TatA subunits. Substrates initially bind to the TatABC complex, which probably triggers association of the separate TatA complex to form the active translocon.

It localises to the cell inner membrane. Part of the twin-arginine translocation (Tat) system that transports large folded proteins containing a characteristic twin-arginine motif in their signal peptide across membranes. Together with TatC, TatB is part of a receptor directly interacting with Tat signal peptides. TatB may form an oligomeric binding site that transiently accommodates folded Tat precursor proteins before their translocation. This is Sec-independent protein translocase protein TatB from Alcanivorax borkumensis (strain ATCC 700651 / DSM 11573 / NCIMB 13689 / SK2).